The following is a 421-amino-acid chain: ATP-dependent RNA helicase RhlB (421 aa).

The Q motif signature appears at 9–37 (QKFSDFALHPKVVEALEKKGFHNCTPIQA). A Helicase ATP-binding domain is found at 40–219 (LPLTLAGRDV…FEQMNNAEYI (180 aa)). 53-60 (AQTGTGKT) contributes to the ATP binding site. Positions 165-168 (DEAD) match the DEAD box motif. A Helicase C-terminal domain is found at 245 to 390 (RLLQTLIEEE…VSKYNPDALM (146 aa)). A disordered region spans residues 395 to 421 (KPLRLTRARTGNGPRRTGAPRNRRRSG). The span at 402-414 (ARTGNGPRRTGAP) shows a compositional bias: low complexity.

This sequence belongs to the DEAD box helicase family. RhlB subfamily. As to quaternary structure, component of the RNA degradosome, which is a multiprotein complex involved in RNA processing and mRNA degradation.

It is found in the cytoplasm. The enzyme catalyses ATP + H2O = ADP + phosphate + H(+). Its function is as follows. DEAD-box RNA helicase involved in RNA degradation. Has RNA-dependent ATPase activity and unwinds double-stranded RNA. This is ATP-dependent RNA helicase RhlB from Shigella flexneri serotype 5b (strain 8401).